A 324-amino-acid chain; its full sequence is Glucosyl-3-phosphoglycerate synthase (324 aa).

UDP-alpha-D-glucose-binding positions include 50-54, Ser-81, Lys-114, and 134-135; these read PALNE and DS. A Mn(2+)-binding site is contributed by Asp-136. (2R)-3-phosphoglycerate is bound at residue 184–187; the sequence is GRVT. UDP-alpha-D-glucose is bound by residues 229-232 and 256-261; these read YGVE and RAHRNR. His-258 is a binding site for Mn(2+). Asn-260 contributes to the (2R)-3-phosphoglycerate binding site.

This sequence belongs to the glycosyltransferase 2 family. In terms of assembly, homotrimer. Requires Mg(2+) as cofactor. Mn(2+) is required as a cofactor.

The enzyme catalyses an NDP-alpha-D-glucose + (2R)-3-phosphoglycerate = (2R)-2-O-(alpha-D-glucopyranosyl)-3-phospho-glycerate + a ribonucleoside 5'-diphosphate + H(+). It catalyses the reaction (2R)-3-phosphoglycerate + UDP-alpha-D-glucose = (2R)-2-O-(alpha-D-glucopyranosyl)-3-phospho-glycerate + UDP + H(+). It carries out the reaction ADP-alpha-D-glucose + (2R)-3-phosphoglycerate = (2R)-2-O-(alpha-D-glucopyranosyl)-3-phospho-glycerate + ADP + H(+). The catalysed reaction is GDP-D-glucose + (2R)-3-phosphoglycerate = (2R)-2-O-(alpha-D-glucopyranosyl)-3-phospho-glycerate + GDP + H(+). Functionally, involved in the biosynthesis of 6-O-methylglucose lipopolysaccarides (MGLPs). Catalyzes the transfer of the glucose moiety from a nuleotide sugar such as UDP-alpha-D-glucose to the position 2 of 3-phospho-D-glycerate (3-PGA) to form glucosyl-3-phosphoglycerate (GPG). It can use UDP-glucose, ADP-glucose and GDP-glucose as sugar donor substrates with decreasing affinity and with 3-PGA as an acceptor. D-glycerate can only be an acceptor with ADP-glucose and at a very low rate. The chain is Glucosyl-3-phosphoglycerate synthase (gpgS) from Mycobacterium bovis (strain ATCC BAA-935 / AF2122/97).